We begin with the raw amino-acid sequence, 601 residues long: Kelch repeat and BTB domain-containing protein 8 (601 aa).

The disordered stretch occupies residues 1–25; it reads MAASADLSKSSPTPNGIPSSDPASD. Over residues 7–22 the composition is skewed to polar residues; the sequence is LSKSSPTPNGIPSSDP. The BTB domain maps to 49–117; sequence TDIVVEVDHG…AYTSRVILTE (69 aa). The BACK domain occupies 153–252; it reads IGVFIFADHY…PLMEDTFIEK (100 aa). Kelch repeat units lie at residues 336 to 390, 391 to 441, 443 to 481, 483 to 532, and 542 to 588; these read DIYI…YCCG, KMYA…EYKE, IYVLQGEFFLFYEPQKDYWGFLTPMTVPRIQGLAAVYKD, IYYI…LFQN, and QVTV…FECA.

It belongs to the KBTBD8 family. Component of the BCR(KBTBD8) E3 ubiquitin ligase complex, at least composed of CUL3, KBTBD8 and RBX1.

It is found in the cytoplasm. Its subcellular location is the cytoskeleton. The protein localises to the spindle. The protein resides in the golgi apparatus. Functionally, substrate-specific adapter of a BCR (BTB-CUL3-RBX1) E3 ubiquitin ligase complex that acts as a regulator of neural crest specification. The BCR(KBTBD8) complex acts by mediating monoubiquitination of NOLC1 and TCOF1: monoubiquitination promotes the formation of a NOLC1-TCOF1 complex that acts as a platform to connect RNA polymerase I with enzymes responsible for ribosomal processing and modification, leading to remodel the translational program of differentiating cells in favor of neural crest specification. This Homo sapiens (Human) protein is Kelch repeat and BTB domain-containing protein 8 (KBTBD8).